Reading from the N-terminus, the 600-residue chain is Aspartate--tRNA(Asp/Asn) ligase (600 aa).

Position 174 (Glu-174) interacts with L-aspartate. Positions 198 to 201 are aspartate; it reads QLFK. Arg-220 provides a ligand contact to L-aspartate. ATP-binding positions include 220 to 222 and Gln-229; that span reads RDE. His-457 lines the L-aspartate pocket. Glu-491 contributes to the ATP binding site. Residue Arg-498 participates in L-aspartate binding. An ATP-binding site is contributed by 543 to 546; sequence GLDR.

Belongs to the class-II aminoacyl-tRNA synthetase family. Type 1 subfamily. As to quaternary structure, homodimer.

Its subcellular location is the cytoplasm. It catalyses the reaction tRNA(Asx) + L-aspartate + ATP = L-aspartyl-tRNA(Asx) + AMP + diphosphate. Its function is as follows. Aspartyl-tRNA synthetase with relaxed tRNA specificity since it is able to aspartylate not only its cognate tRNA(Asp) but also tRNA(Asn). Reaction proceeds in two steps: L-aspartate is first activated by ATP to form Asp-AMP and then transferred to the acceptor end of tRNA(Asp/Asn). This is Aspartate--tRNA(Asp/Asn) ligase from Burkholderia vietnamiensis (strain G4 / LMG 22486) (Burkholderia cepacia (strain R1808)).